A 152-amino-acid polypeptide reads, in one-letter code: Transcriptional regulator MraZ (152 aa).

SpoVT-AbrB domains are found at residues 5–52 (ATLV…PLPE) and 81–124 (ASEC…DETT).

Belongs to the MraZ family. Forms oligomers.

The protein localises to the cytoplasm. It is found in the nucleoid. Functionally, negatively regulates its own expression and that of the subsequent genes in the proximal part of the division and cell wall (dcw) gene cluster. Acts by binding directly to DNA. May also regulate the expression of genes outside the dcw cluster. The chain is Transcriptional regulator MraZ from Salmonella paratyphi A (strain ATCC 9150 / SARB42).